A 475-amino-acid polypeptide reads, in one-letter code: ATP synthase subunit beta (475 aa).

152-159 is a binding site for ATP; it reads GGAGVGKT.

It belongs to the ATPase alpha/beta chains family. In terms of assembly, F-type ATPases have 2 components, CF(1) - the catalytic core - and CF(0) - the membrane proton channel. CF(1) has five subunits: alpha(3), beta(3), gamma(1), delta(1), epsilon(1). CF(0) has four main subunits: a(1), b(1), b'(1) and c(9-12).

The protein resides in the cell inner membrane. The catalysed reaction is ATP + H2O + 4 H(+)(in) = ADP + phosphate + 5 H(+)(out). In terms of biological role, produces ATP from ADP in the presence of a proton gradient across the membrane. The catalytic sites are hosted primarily by the beta subunits. The chain is ATP synthase subunit beta from Cereibacter sphaeroides (strain ATCC 17025 / ATH 2.4.3) (Rhodobacter sphaeroides).